Reading from the N-terminus, the 931-residue chain is Bifunctional uridylyltransferase/uridylyl-removing enzyme (931 aa).

A uridylyltransferase region spans residues 1–383; that stretch reads MDSVTPNSRP…KTGNSWRRVP (383 aa). Positions 384–739 are uridylyl-removing; that stretch reads ESDDFIVDNN…VGFDPARGVT (356 aa). The 124-residue stretch at 499 to 622 folds into the HD domain; sequence VDEHLIRCIG…VQSVEQMKLL (124 aa). 2 ACT domains span residues 740–822 and 851–931; these read ELTI…AVAR and VIEV…QPAA.

The protein belongs to the GlnD family. Requires Mg(2+) as cofactor.

It carries out the reaction [protein-PII]-L-tyrosine + UTP = [protein-PII]-uridylyl-L-tyrosine + diphosphate. It catalyses the reaction [protein-PII]-uridylyl-L-tyrosine + H2O = [protein-PII]-L-tyrosine + UMP + H(+). Uridylyltransferase (UTase) activity is inhibited by glutamine, while glutamine activates uridylyl-removing (UR) activity. Modifies, by uridylylation and deuridylylation, the PII regulatory proteins (GlnB and homologs), in response to the nitrogen status of the cell that GlnD senses through the glutamine level. Under low glutamine levels, catalyzes the conversion of the PII proteins and UTP to PII-UMP and PPi, while under higher glutamine levels, GlnD hydrolyzes PII-UMP to PII and UMP (deuridylylation). Thus, controls uridylylation state and activity of the PII proteins, and plays an important role in the regulation of nitrogen fixation and metabolism. The polypeptide is Bifunctional uridylyltransferase/uridylyl-removing enzyme (Bradyrhizobium sp. (strain BTAi1 / ATCC BAA-1182)).